The sequence spans 631 residues: Phosphomethylpyrimidine synthase (631 aa).

Substrate-binding positions include asparagine 239, methionine 268, tyrosine 297, histidine 333, 353–355, 394–397, and glutamate 433; these read SRG and DGLR. Histidine 437 contacts Zn(2+). Tyrosine 460 provides a ligand contact to substrate. Histidine 501 is a Zn(2+) binding site. The [4Fe-4S] cluster site is built by cysteine 581, cysteine 584, and cysteine 589.

This sequence belongs to the ThiC family. Homodimer. The cofactor is [4Fe-4S] cluster.

The enzyme catalyses 5-amino-1-(5-phospho-beta-D-ribosyl)imidazole + S-adenosyl-L-methionine = 4-amino-2-methyl-5-(phosphooxymethyl)pyrimidine + CO + 5'-deoxyadenosine + formate + L-methionine + 3 H(+). It functions in the pathway cofactor biosynthesis; thiamine diphosphate biosynthesis. In terms of biological role, catalyzes the synthesis of the hydroxymethylpyrimidine phosphate (HMP-P) moiety of thiamine from aminoimidazole ribotide (AIR) in a radical S-adenosyl-L-methionine (SAM)-dependent reaction. The protein is Phosphomethylpyrimidine synthase of Salmonella paratyphi B (strain ATCC BAA-1250 / SPB7).